Here is a 428-residue protein sequence, read N- to C-terminus: Divergent protein kinase domain 1A (428 aa).

The Cytoplasmic segment spans residues 1–27; sequence MARSLCAGAWLRKPHYLQARLSYMRVK. A helical transmembrane segment spans residues 28–48; sequence YLFFSWLVVFVGSWIIYVQYS. Over 49-428 the chain is Lumenal; that stretch reads TYTELCRGKD…WKKISYTNDS (380 aa).

This sequence belongs to the DIPK family. In terms of processing, among the many cysteines in the lumenal domain, most are probably involved in disulfide bonds. As to expression, ubiquitous.

Its subcellular location is the endoplasmic reticulum membrane. This is Divergent protein kinase domain 1A (Dipk1a) from Mus musculus (Mouse).